Consider the following 103-residue polypeptide: Phosphoribosyl-ATP pyrophosphatase (103 aa).

The segment at 79 to 103 (SVQAELERREGKLSTTRDRKEIDEL) is disordered. Residues 83–103 (ELERREGKLSTTRDRKEIDEL) show a composition bias toward basic and acidic residues.

The protein belongs to the PRA-PH family.

It localises to the cytoplasm. The enzyme catalyses 1-(5-phospho-beta-D-ribosyl)-ATP + H2O = 1-(5-phospho-beta-D-ribosyl)-5'-AMP + diphosphate + H(+). The protein operates within amino-acid biosynthesis; L-histidine biosynthesis; L-histidine from 5-phospho-alpha-D-ribose 1-diphosphate: step 2/9. The protein is Phosphoribosyl-ATP pyrophosphatase of Listeria welshimeri serovar 6b (strain ATCC 35897 / DSM 20650 / CCUG 15529 / CIP 8149 / NCTC 11857 / SLCC 5334 / V8).